Here is a 275-residue protein sequence, read N- to C-terminus: Large ribosomal subunit protein uL2 (275 aa).

The tract at residues 221–275 is disordered; that stretch reads VRGVAMNPVDHPMGGGEGKSSGGRHPCSPWGQQSKGVRTRNNKRTDQFIVKRRSK.

The protein belongs to the universal ribosomal protein uL2 family. As to quaternary structure, part of the 50S ribosomal subunit. Forms a bridge to the 30S subunit in the 70S ribosome.

In terms of biological role, one of the primary rRNA binding proteins. Required for association of the 30S and 50S subunits to form the 70S ribosome, for tRNA binding and peptide bond formation. It has been suggested to have peptidyltransferase activity; this is somewhat controversial. Makes several contacts with the 16S rRNA in the 70S ribosome. This is Large ribosomal subunit protein uL2 from Desulfosudis oleivorans (strain DSM 6200 / JCM 39069 / Hxd3) (Desulfococcus oleovorans).